The primary structure comprises 85 residues: Protein MC005 (85 aa).

In terms of assembly, interacts with host IKBKG; this interaction prevents NF-kappa-B activation.

It is found in the host cytoplasm. In terms of biological role, plays a role in the inhibition of the host NF-kappa-B pathway by preventing ubiquitin binding-dependent regulation of host IKBKB activation by IKBKG/NEMO. This chain is Protein MC005 (MC005L), found in Molluscum contagiosum virus subtype 1 (MOCV).